The primary structure comprises 186 residues: ATP-dependent protease subunit HslV (186 aa).

Thr-14 is a catalytic residue. Na(+) is bound by residues Ala-168, Cys-171, and Thr-174.

Belongs to the peptidase T1B family. HslV subfamily. As to quaternary structure, a double ring-shaped homohexamer of HslV is capped on each side by a ring-shaped HslU homohexamer. The assembly of the HslU/HslV complex is dependent on binding of ATP.

The protein localises to the cytoplasm. The enzyme catalyses ATP-dependent cleavage of peptide bonds with broad specificity.. Allosterically activated by HslU binding. Its function is as follows. Protease subunit of a proteasome-like degradation complex believed to be a general protein degrading machinery. The polypeptide is ATP-dependent protease subunit HslV (Bradyrhizobium sp. (strain ORS 278)).